The primary structure comprises 179 residues: Large ribosomal subunit protein uL6 (179 aa).

It belongs to the universal ribosomal protein uL6 family. In terms of assembly, part of the 50S ribosomal subunit.

Functionally, this protein binds to the 23S rRNA, and is important in its secondary structure. It is located near the subunit interface in the base of the L7/L12 stalk, and near the tRNA binding site of the peptidyltransferase center. The chain is Large ribosomal subunit protein uL6 from Geotalea daltonii (strain DSM 22248 / JCM 15807 / FRC-32) (Geobacter daltonii).